The chain runs to 492 residues: NADH-quinone oxidoreductase subunit N (492 aa).

14 consecutive transmembrane segments (helical) span residues 16-36 (LLIP…VGVF), 44-64 (LYIT…FLEG), 81-101 (ISLL…LFFM), 111-131 (GAEF…MASS), 134-154 (LILI…LIAL), 168-188 (FIMG…LYAA), 210-230 (ILVF…VTLV), 244-264 (NALL…AVII), 276-296 (AFVE…PNLI), 306-326 (MLAY…LINT), 332-352 (VIFF…GILW), 382-402 (LAIL…FCVF), 423-443 (IMAI…IYIF), and 463-483 (FALS…QNLL).

The protein belongs to the complex I subunit 2 family. In terms of assembly, NDH-1 is composed of 14 different subunits. Subunits NuoA, H, J, K, L, M, N constitute the membrane sector of the complex.

The protein localises to the cell inner membrane. It catalyses the reaction a quinone + NADH + 5 H(+)(in) = a quinol + NAD(+) + 4 H(+)(out). Functionally, NDH-1 shuttles electrons from NADH, via FMN and iron-sulfur (Fe-S) centers, to quinones in the respiratory chain. The immediate electron acceptor for the enzyme in this species is believed to be ubiquinone. Couples the redox reaction to proton translocation (for every two electrons transferred, four hydrogen ions are translocated across the cytoplasmic membrane), and thus conserves the redox energy in a proton gradient. The chain is NADH-quinone oxidoreductase subunit N from Helicobacter hepaticus (strain ATCC 51449 / 3B1).